The sequence spans 79 residues: Acyl carrier protein (79 aa).

In terms of domain architecture, Carrier spans 2–77 (ESIEQRVKKI…QAVDYINSHG (76 aa)). Position 37 is an O-(pantetheine 4'-phosphoryl)serine (Ser-37).

Belongs to the acyl carrier protein (ACP) family. 4'-phosphopantetheine is transferred from CoA to a specific serine of apo-ACP by AcpS. This modification is essential for activity because fatty acids are bound in thioester linkage to the sulfhydryl of the prosthetic group.

It is found in the cytoplasm. It participates in lipid metabolism; fatty acid biosynthesis. Its function is as follows. Carrier of the growing fatty acid chain in fatty acid biosynthesis. The chain is Acyl carrier protein from Bordetella parapertussis (strain 12822 / ATCC BAA-587 / NCTC 13253).